A 351-amino-acid polypeptide reads, in one-letter code: Glycerol-1-phosphate dehydrogenase [NAD(P)+] (351 aa).

Residues G97 to D101 and T119 to S122 each bind NAD(+). D124 provides a ligand contact to substrate. Position 128 (S128) interacts with NAD(+). Substrate is bound at residue D171. The Zn(2+) site is built by D171 and H251. H255 is a substrate binding site. Position 267 (H267) interacts with Zn(2+).

It belongs to the glycerol-1-phosphate dehydrogenase family. In terms of assembly, homodimer. Zn(2+) is required as a cofactor.

It localises to the cytoplasm. It carries out the reaction sn-glycerol 1-phosphate + NAD(+) = dihydroxyacetone phosphate + NADH + H(+). The enzyme catalyses sn-glycerol 1-phosphate + NADP(+) = dihydroxyacetone phosphate + NADPH + H(+). It functions in the pathway membrane lipid metabolism; glycerophospholipid metabolism. In terms of biological role, catalyzes the NAD(P)H-dependent reduction of dihydroxyacetonephosphate (DHAP or glycerone phosphate) to glycerol 1-phosphate (G1P). The G1P thus generated is used as the glycerophosphate backbone of phospholipids in the cellular membranes of Archaea. This Metallosphaera sedula (strain ATCC 51363 / DSM 5348 / JCM 9185 / NBRC 15509 / TH2) protein is Glycerol-1-phosphate dehydrogenase [NAD(P)+].